The chain runs to 607 residues: MPKSPHKLFKANSFWKENNLILREIKHFRKIAILAVIFSFLAASFEGVSIGFLLSFLQKLTSPNDPIQTGISWVDMILAADAWPIPPIYRISLLILLSTWMRATFNYFGGVYTESAQLNLADRLHKQIFEQLQALRLSYFAQTRSGELINTITTEIERIKQGFSGLAFVLTRIMTVCVYFVVMFSISWQLSIISVLIFLLLAVGLSTLNKRVRETSFGISHANAQFTAVAVEFINGIRTIQAFGTQEFERQRFYKASTNQLNAAIKVVLAWTLVKPIAEGIATTVLISLIVISFATFTLPVASLLTFFFVLVRVIPNIQDINGTVAFLSTLQGSSENIKNILQTNNKPYLKNGKLHFQGLKRSIDLVSVDFGYTADNLVLNNITLTIERGKTTALVGASGAGKTTLADLIPRFYDPTEGQILVDGLDVQYFEINSLRRKMAVVSQDTFIFNTSIRDNIAYGTSGASEAEIREVARLANALQFIEEMPEGFDTKLGDRGVRLSGGQRQRIAIARALLRDPEILILDEATSALDSVSERLIQESIEKLSVGRTVIAIAHRLSTIAKADKVVVMEQGRIVEQGNYQELLEQRGKLWKYHQMQHESGQTNS.

The ABC transmembrane type-1 domain maps to 32–330 (AILAVIFSFL…INGTVAFLST (299 aa)). Transmembrane regions (helical) follow at residues 33 to 53 (ILAV…IGFL), 77 to 97 (ILAA…LILL), 163 to 182 (FSGL…YFVV), 186 to 208 (ISWQ…LSTL), and 290 to 310 (IVIS…FFFV). In terms of domain architecture, ABC transporter spans 364–598 (IDLVSVDFGY…RGKLWKYHQM (235 aa)). ATP is bound at residue 397–404 (GASGAGKT).

It belongs to the ABC transporter superfamily.

Its subcellular location is the cell inner membrane. Acts early in the process of morphological differentiation of heterocysts. In Nostoc sp. (strain PCC 7120 / SAG 25.82 / UTEX 2576), this protein is Heterocyst differentiation ATP-binding protein HepA (hepA).